Consider the following 226-residue polypeptide: Deoxyribose-phosphate aldolase (226 aa).

Catalysis depends on glutamate 96, which acts as the Proton donor/acceptor. The active-site Schiff-base intermediate with acetaldehyde is the lysine 157. Lysine 185 acts as the Proton donor/acceptor in catalysis.

It belongs to the DeoC/FbaB aldolase family. DeoC type 1 subfamily.

It is found in the cytoplasm. It catalyses the reaction 2-deoxy-D-ribose 5-phosphate = D-glyceraldehyde 3-phosphate + acetaldehyde. It functions in the pathway carbohydrate degradation; 2-deoxy-D-ribose 1-phosphate degradation; D-glyceraldehyde 3-phosphate and acetaldehyde from 2-deoxy-alpha-D-ribose 1-phosphate: step 2/2. In terms of biological role, catalyzes a reversible aldol reaction between acetaldehyde and D-glyceraldehyde 3-phosphate to generate 2-deoxy-D-ribose 5-phosphate. This Gloeobacter violaceus (strain ATCC 29082 / PCC 7421) protein is Deoxyribose-phosphate aldolase.